We begin with the raw amino-acid sequence, 178 residues long: Transcription antitermination protein NusB (178 aa).

The protein belongs to the NusB family.

In terms of biological role, involved in transcription antitermination. Required for transcription of ribosomal RNA (rRNA) genes. Binds specifically to the boxA antiterminator sequence of the ribosomal RNA (rrn) operons. The chain is Transcription antitermination protein NusB from Alkalilimnicola ehrlichii (strain ATCC BAA-1101 / DSM 17681 / MLHE-1).